The sequence spans 71 residues: Delta-actitoxin-Avd2b 2 (71 aa).

Residues 1–20 (MNRLLVFLMLGAAFMLVVSA) form the signal peptide. Positions 21-41 (NDAYGDEPAFKDLNQGDESLG) are excised as a propeptide. Cystine bridges form between Cys46/Cys61, Cys47/Cys55, and Cys49/Cys66.

Belongs to the sea anemone short toxin (type III) family.

It localises to the secreted. The protein resides in the nematocyst. Its function is as follows. Voltage-gated sodium channel (Nav) inhibitor. 1 uM completely inhibits insect voltage-gated sodium channel inactivation (DmNav1 from D.melanogaster). This is Delta-actitoxin-Avd2b 2 from Anemonia viridis (Snakelocks anemone).